We begin with the raw amino-acid sequence, 174 residues long: Secretion monitor (174 aa).

Positions 1–35 are cleaved as a signal peptide; sequence MGILNLWRQFGRRYFWSHLLLGVVAASIGAPTILA.

The protein belongs to the SecM family.

It localises to the cytoplasm. It is found in the cytosol. Its subcellular location is the periplasm. Regulates secA expression by translational coupling of the secM secA operon. Translational pausing at a specific Pro residue 5 residues before the end of the protein may allow disruption of a mRNA repressor helix that normally suppresses secA translation initiation. This is Secretion monitor from Photorhabdus laumondii subsp. laumondii (strain DSM 15139 / CIP 105565 / TT01) (Photorhabdus luminescens subsp. laumondii).